Here is a 548-residue protein sequence, read N- to C-terminus: Cytochrome P450 monooxygenase lcsK (548 aa).

A run of 2 helical transmembrane segments spans residues histidine 28 to phenylalanine 48 and valine 68 to phenylalanine 88. N-linked (GlcNAc...) asparagine glycosylation is found at asparagine 172, asparagine 223, asparagine 242, and asparagine 404. Cysteine 487 serves as a coordination point for heme.

This sequence belongs to the cytochrome P450 family. The cofactor is heme.

The protein localises to the membrane. The protein operates within secondary metabolite biosynthesis. Cytochrome P450 monooxygenase; part of the gene cluster that mediates the biosynthesis of the lipopeptide antibiotics leucinostatins that show extensive biological activities, including antimalarial, antiviral, antibacterial, antifungal, and antitumor activities, as well as phytotoxic. Leucinostatin A contains nine amino acid residues, including the unusual amino acid 4-methyl-L-proline (MePro), 2-amino-6-hydroxy-4-methyl-8-oxodecanoic acid (AHyMeOA), 3-hydroxyleucine (HyLeu), alpha-aminoisobutyric acid (AIB), beta-Ala, a 4-methylhex-2-enoic acid at the N-terminus as well as a N1,N1-dimethylpropane-1,2-diamine (DPD) at the C-terminus. The biosynthesis of leucinostatins is probably initiated with the assembly of 4-methylhex-2-enoic acid by a reducing PKS. Two reducing polyketide synthases, lcsB and lcsC, have been identified in the cluster and it is not clear which is the one that assembles 4-methylhex-2-enoic acid since both contain KS, AT, DH, cMT, ER, KR and ACP domains. The polyketide residue might be transferred to the NRPS lcsA, mediated by two additional enzymes, the acyl-CoA ligase lcsD and the thioesterase lcsE. The linear polyketide carboxylic acid, which is released from PKS, is converted to a CoA thioester by lcsD, and then lcsE hydrolyzes the thiol bond and shuttles the polyketide intermediate to lcsA. The C domain of the first module catalyzed the condensation of 4-methylhex-2-enoic acid and MePro carried by domain A1, followed by successive condensations of nine amino acids to trigger the elongation of the linear peptide. A5 and A6 domains of lcsA are proposed to incorporate leucine, A2 AHyMeOA, and A3 incorporates HyLeu. A4, A7 and A8 incorporate AIB. The AHyMeOA in leucinostatin A activated by the A2 might be produced by the second PKS (lcsB or lcsC) present within the cluster. The MePro is probably produced via leucine cyclization and may originate from a separate pathway, independent of the cluster. Another nonproteinogenic amino acid, beta-Ala, could be produced by an aspartic acid decarboxylase also localized outside of the cluster. Two candidates are VFPBJ_01400 and VFPBJ_10476. The final peptide scaffold may be released by the NAD(P)H-dependent thioester reductase (TE) at the C-terminal region of lcsA. Transamination of the lcsA product by the transaminase lcsP may produce DPD at the C-terminus. Further hydroxylation steps performed alternatively by the cytochrome P450 monooxygenases lcsI, lcsK and lcsN then yield the non-methylated leucinostatins precursor. It is also possible that leucines can be hydroxylated prior to their incorporation into the peptide. Varying extents of methylation then lead to the formation of leucinostatins A and B. This chain is Cytochrome P450 monooxygenase lcsK, found in Purpureocillium lilacinum (Paecilomyces lilacinus).